The primary structure comprises 290 residues: Formamidopyrimidine-DNA glycosylase (290 aa).

Proline 2 functions as the Schiff-base intermediate with DNA in the catalytic mechanism. Residue glutamate 3 is the Proton donor of the active site. Lysine 58 functions as the Proton donor; for beta-elimination activity in the catalytic mechanism. Residues histidine 97, arginine 122, and lysine 165 each contribute to the DNA site. The FPG-type; atypical zinc-finger motif lies at 250-290 (KVYGREGEPCPGCDCDPVRTGGIARIVQSGRSTFYCPRHQR). The active-site Proton donor; for delta-elimination activity is the arginine 280.

This sequence belongs to the FPG family. In terms of assembly, monomer. Zn(2+) is required as a cofactor.

The catalysed reaction is Hydrolysis of DNA containing ring-opened 7-methylguanine residues, releasing 2,6-diamino-4-hydroxy-5-(N-methyl)formamidopyrimidine.. It catalyses the reaction 2'-deoxyribonucleotide-(2'-deoxyribose 5'-phosphate)-2'-deoxyribonucleotide-DNA = a 3'-end 2'-deoxyribonucleotide-(2,3-dehydro-2,3-deoxyribose 5'-phosphate)-DNA + a 5'-end 5'-phospho-2'-deoxyribonucleoside-DNA + H(+). Its function is as follows. Involved in base excision repair of DNA damaged by oxidation or by mutagenic agents. Acts as a DNA glycosylase that recognizes and removes damaged bases. Has a preference for oxidized purines, such as 7,8-dihydro-8-oxoguanine (8-oxoG). Has AP (apurinic/apyrimidinic) lyase activity and introduces nicks in the DNA strand. Cleaves the DNA backbone by beta-delta elimination to generate a single-strand break at the site of the removed base with both 3'- and 5'-phosphates. The sequence is that of Formamidopyrimidine-DNA glycosylase from Rhodospirillum centenum (strain ATCC 51521 / SW).